The following is a 51-amino-acid chain: uncharacterized protein (51 aa).

The tract at residues 1–51 (MARTNVKLCPPKRSKRPSNSRSKSTSHSNRRSLNSLRRTRTSRRSNNGKFT) is disordered. Over residues 19 to 36 (NSRSKSTSHSNRRSLNSL) the composition is skewed to low complexity.

This is an uncharacterized protein from Bdellovibrio bacteriovorus (Bacteriophage phiMH2K).